A 356-amino-acid polypeptide reads, in one-letter code: 3-isopropylmalate dehydrogenase (356 aa).

NAD(+) is bound at residue Gly73–Glu86. Substrate is bound by residues Arg93, Arg103, Arg131, and Asp220. Mg(2+) is bound by residues Asp220, Asp244, and Asp248. Gly278–Asn290 is an NAD(+) binding site.

It belongs to the isocitrate and isopropylmalate dehydrogenases family. LeuB type 1 subfamily. In terms of assembly, homodimer. It depends on Mg(2+) as a cofactor. The cofactor is Mn(2+).

The protein localises to the cytoplasm. It catalyses the reaction (2R,3S)-3-isopropylmalate + NAD(+) = 4-methyl-2-oxopentanoate + CO2 + NADH. It participates in amino-acid biosynthesis; L-leucine biosynthesis; L-leucine from 3-methyl-2-oxobutanoate: step 3/4. Its function is as follows. Catalyzes the oxidation of 3-carboxy-2-hydroxy-4-methylpentanoate (3-isopropylmalate) to 3-carboxy-4-methyl-2-oxopentanoate. The product decarboxylates to 4-methyl-2 oxopentanoate. The chain is 3-isopropylmalate dehydrogenase from Nitrosomonas europaea (strain ATCC 19718 / CIP 103999 / KCTC 2705 / NBRC 14298).